We begin with the raw amino-acid sequence, 313 residues long: Ribosomal RNA small subunit methyltransferase H (313 aa).

S-adenosyl-L-methionine is bound by residues Gly35–His37, Asp55, Phe81, Asp103, and Gln110.

Belongs to the methyltransferase superfamily. RsmH family.

It localises to the cytoplasm. The catalysed reaction is cytidine(1402) in 16S rRNA + S-adenosyl-L-methionine = N(4)-methylcytidine(1402) in 16S rRNA + S-adenosyl-L-homocysteine + H(+). In terms of biological role, specifically methylates the N4 position of cytidine in position 1402 (C1402) of 16S rRNA. The sequence is that of Ribosomal RNA small subunit methyltransferase H from Pseudomonas aeruginosa (strain ATCC 15692 / DSM 22644 / CIP 104116 / JCM 14847 / LMG 12228 / 1C / PRS 101 / PAO1).